The primary structure comprises 484 residues: MIKERVIIVGSGISGCTAALRLMQDYDVTIITKGYKEESNSMLAQGGVAAAVSKNDTPKKHFSDTFQAGCFHNKVLAVNQLVTHGPMVIQKLIAEGMAFDEQDGELALGLEGAHQLPRILHTGGDQTGKFLTTFLQEKLTDIHWQEQKMAIEIIKQNDSAIGVHCLDKENRLHTYYGEHIILASGGLGQLFPVTTNAATISGDGLALAYRAGAKLTDMEFIQFHPTLLFLNGRCHGLISEAVRGEGAKLIRADGSAIMTDVHPRADLAPRDIVAATLFAEIQDGNEVFLDITAIPNFEKRFPGITANLDAHHIPFRETKRIPVHPGAHFLMGGIRTDLSGKTNIPGLYAIGEVANAGVHGANRLASNSLLETLVFGEKVAEYIRTQKINPIDHPEIPLSNQIQTPHLPDKQLLQEKIWETLGITRKPEKITEFLHWLTDFDYANHTRKTAEISHMLITAKLIAESALKRTESLGAHRILKGVIK.

FAD is bound by residues 11-14, lysine 33, 40-47, and aspartate 203; these read SGIS and NSMLAQGG. Residue arginine 270 is the Proton donor/acceptor of the active site. FAD contacts are provided by residues glutamate 352 and 368 to 369; that span reads SL.

It belongs to the FAD-dependent oxidoreductase 2 family. NadB subfamily. It depends on FAD as a cofactor.

The protein localises to the cytoplasm. The enzyme catalyses L-aspartate + O2 = iminosuccinate + H2O2. The protein operates within cofactor biosynthesis; NAD(+) biosynthesis; iminoaspartate from L-aspartate (oxidase route): step 1/1. Its function is as follows. Catalyzes the oxidation of L-aspartate to iminoaspartate, the first step in the de novo biosynthesis of NAD(+). The chain is L-aspartate oxidase (nadB) from Listeria monocytogenes serovar 1/2a (strain ATCC BAA-679 / EGD-e).